The primary structure comprises 750 residues: Photosystem I P700 chlorophyll a apoprotein A1 (750 aa).

8 helical membrane-spanning segments follow: residues 70–93 (VFSA…FHGA), 156–179 (LYCT…FHYH), 195–219 (LNHH…HVSL), 291–309 (IAHH…GHMY), 346–369 (WHAQ…HHMY), 385–411 (LSLF…IFMV), 433–455 (AIIS…LYIH), and 531–549 (FLVH…LILL). [4Fe-4S] cluster contacts are provided by Cys573 and Cys582. 2 helical membrane passes run 589–610 (HVFL…HFSW) and 664–686 (LSAY…MFLF). His675 is a binding site for chlorophyll a'. Chlorophyll a-binding residues include Met683 and Tyr691. Trp692 contacts phylloquinone. The helical transmembrane segment at 724–744 (AVGVTHYLLGGIATTWAFFLA) threads the bilayer.

The protein belongs to the PsaA/PsaB family. In terms of assembly, the PsaA/B heterodimer binds the P700 chlorophyll special pair and subsequent electron acceptors. PSI consists of a core antenna complex that captures photons, and an electron transfer chain that converts photonic excitation into a charge separation. The eukaryotic PSI reaction center is composed of at least 11 subunits. Requires P700 is a chlorophyll a/chlorophyll a' dimer, A0 is one or more chlorophyll a, A1 is one or both phylloquinones and FX is a shared 4Fe-4S iron-sulfur center. as cofactor.

The protein localises to the plastid. The protein resides in the chloroplast thylakoid membrane. The enzyme catalyses reduced [plastocyanin] + hnu + oxidized [2Fe-2S]-[ferredoxin] = oxidized [plastocyanin] + reduced [2Fe-2S]-[ferredoxin]. PsaA and PsaB bind P700, the primary electron donor of photosystem I (PSI), as well as the electron acceptors A0, A1 and FX. PSI is a plastocyanin-ferredoxin oxidoreductase, converting photonic excitation into a charge separation, which transfers an electron from the donor P700 chlorophyll pair to the spectroscopically characterized acceptors A0, A1, FX, FA and FB in turn. Oxidized P700 is reduced on the lumenal side of the thylakoid membrane by plastocyanin. The protein is Photosystem I P700 chlorophyll a apoprotein A1 of Pelargonium hortorum (Common geranium).